A 600-amino-acid polypeptide reads, in one-letter code: NADH-quinone oxidoreductase subunit C/D (600 aa).

The interval 1–190 (MVNNMTDLTA…SPFELTKAKQ (190 aa)) is NADH dehydrogenase I subunit C. The tract at residues 214 to 600 (DFMFLNLGPN…IDFVMSDVDR (387 aa)) is NADH dehydrogenase I subunit D.

The protein in the N-terminal section; belongs to the complex I 30 kDa subunit family. This sequence in the C-terminal section; belongs to the complex I 49 kDa subunit family. NDH-1 is composed of 13 different subunits. Subunits NuoB, CD, E, F, and G constitute the peripheral sector of the complex.

The protein localises to the cell inner membrane. It carries out the reaction a quinone + NADH + 5 H(+)(in) = a quinol + NAD(+) + 4 H(+)(out). Its function is as follows. NDH-1 shuttles electrons from NADH, via FMN and iron-sulfur (Fe-S) centers, to quinones in the respiratory chain. The immediate electron acceptor for the enzyme in this species is believed to be ubiquinone. Couples the redox reaction to proton translocation (for every two electrons transferred, four hydrogen ions are translocated across the cytoplasmic membrane), and thus conserves the redox energy in a proton gradient. This is NADH-quinone oxidoreductase subunit C/D from Escherichia coli (strain K12 / DH10B).